The sequence spans 130 residues: MRRHRLQHHGTCANLRAAPNFNIAEDFRARANHHTFTNFRVTVTTRFTRTAKRHRLQNRYVVFNHRRFTNDDACRVVKHDTATNFCCRVNIDLERHRNLVLQKDCQCATPLIPQPVTDAIGLQGMKTLQV.

This is an uncharacterized protein from Escherichia coli (strain K12).